A 688-amino-acid polypeptide reads, in one-letter code: Phosphatidylinositol 4-phosphate 5-kinase type-1 gamma (688 aa).

The tract at residues 48 to 71 (GQPGPGHGKKLGHRGVDASGETTY) is disordered. One can recognise a PIPK domain in the interval 75–443 (TSSTLKGAIQ…RFFKFMSSTV (369 aa)). 2 positions are modified to N6-acetyllysine: lysine 265 and lysine 268. Residue arginine 459 is modified to Asymmetric dimethylarginine; alternate. Omega-N-methylarginine; alternate is present on arginine 459. Residues 525 to 534 (TTLSSTSLSI) show a composition bias toward low complexity. Disordered regions lie at residues 525–565 (TTLS…QEEL) and 592–629 (GAGV…EEDA). At serine 554 the chain carries Phosphoserine. Positions 602–623 (ASAAATVEVDAASQASEPASQA) are enriched in low complexity. Tyrosine 635 bears the Phosphotyrosine; by EGFR mark. Tyrosine 671 is modified (phosphotyrosine; by CSK). Serine 672 is subject to Phosphoserine; by CDK5, MAPK1 and CDK1. Phosphoserine is present on residues serine 682 and serine 686. Phosphothreonine is present on threonine 688.

As to quaternary structure, interacts with TLN1. Interacts with TLN2; interaction stimulates 1-phosphatidylinositol-4-phosphate 5-kinase activity. May compete with beta-integrins for the same binding site on TLN1 and TLN2. Interacts with ARF6; interaction stimulates 1-phosphatidylinositol-4-phosphate 5-kinase activity. Interacts with AP2B1. Interacts with AP2M1; phosphorylation of PIP5K1C by CSK disrupts the interaction; clathrin competes with PIP5K1C. Interacts with CDH1. Interacts with CSK. Interacts with PLCG1; interaction is abolished upon EGF stimulation. Interacts with LAPTM4B; promotes SNX5 association with LAPTM4B; kinase activity of PIP5K1C is required; interaction is regulated by phosphatidylinositol 4,5-bisphosphate generated by PIP5K1C. In terms of processing, phosphorylation on Ser-672 negatively regulates binding to TLN2 and is strongly stimulated in mitosis. Phosphorylation on Tyr-671 is necessary for targeting to focal adhesions. Phosphorylation on Ser-672 and Tyr-671 are mutually exclusive. Phosphorylated by SYK and CSK. Tyrosine phosphorylation is enhanced by PTK2 signaling. Phosphorylated at Tyr-635 upon EGF stimulation. Some studies suggest that phosphorylation on Tyr-671 enhances binding to tailins (TLN1 and TLN2); others that phosphorylation at Tyr-671 does not directly enhance binding to tailins (TLN1 and TLN2) but may act indirectly by inhibiting phosphorylation at Ser-672. Post-translationally, acetylation at Lys-265 and Lys-268 seems to decrease lipid kinase activity. Deacetylation of these sites by SIRT1 positively regulates the exocytosis of TSH-containing granules from pituitary cells.

Its subcellular location is the cell membrane. The protein resides in the endomembrane system. It localises to the cytoplasm. The protein localises to the cell junction. It is found in the focal adhesion. Its subcellular location is the adherens junction. The protein resides in the cell projection. It localises to the ruffle membrane. The protein localises to the phagocytic cup. It is found in the uropodium. It catalyses the reaction a 1,2-diacyl-sn-glycero-3-phospho-(1D-myo-inositol 4-phosphate) + ATP = a 1,2-diacyl-sn-glycero-3-phospho-(1D-myo-inositol-4,5-bisphosphate) + ADP + H(+). The enzyme catalyses 1-octadecanoyl-2-(5Z,8Z,11Z,14Z)-eicosatetraenoyl-sn-glycero-3-phospho-1D-myo-inositol 4-phosphate + ATP = 1-octadecanoyl-2-(5Z,8Z,11Z,14Z)-eicosatetraenoyl-sn-glycero-3-phospho-1D-myo-inositol 4,5-bisphosphate + ADP + H(+). The catalysed reaction is 1-octadecanoyl-2-(9Z)-octadecenoyl-sn-glycero-3-phospho-1D-myo-inositol 4-phosphate + ATP = 1-octadecanoyl-2-(9Z)-octadecenoyl-sn-glycero-3-phospho-1D-myo-inositol 4,5-bisphosphate + ADP + H(+). It carries out the reaction 1-octadecanoyl-2-(9Z)-octadecenoyl-sn-glycero-3-phospho-1D-myo-inositol + ATP = 1-octadecanoyl-2-(9Z)-octadecenoyl-sn-glycero-3-phospho-1D-myo-inositol 5-phosphate + ADP + H(+). It catalyses the reaction 1-octadecanoyl-2-(9Z,12Z)-octadecadienoyl-sn-glycero-3-phospho-1D-myo-inositol + ATP = 1-octadecanoyl-2-(9Z,12Z)-octadecadienoyl-sn-glycero-3-phospho-1D-myo-inositol 5-phosphate + ADP + H(+). The enzyme catalyses 1-octadecanoyl-2-(5Z,8Z,11Z,14Z-eicosatetraenoyl)-sn-glycero-3-phospho-(1D-myo-inositol) + ATP = 1-octadecanoyl-2-(5Z,8Z,11Z,14Z)-eicosatetraenoyl-sn-glycero-3-phospho-1D-myo-inositol 5-phosphate + ADP + H(+). The catalysed reaction is 1,2-di-(9Z,12Z)-octadecadienoyl-sn-glycero-3-phospho-1D-myo-inositol + ATP = 1,2-di(9Z,12Z)-octadecadienoyl-sn-glycero-3-phospho-1D-myo-inositol 5-phosphate + ADP + H(+). Catalyzes the phosphorylation of phosphatidylinositol 4-phosphate (PtdIns(4)P/PI4P) to form phosphatidylinositol 4,5-bisphosphate (PtdIns(4,5)P2/PIP2), a lipid second messenger that regulates several cellular processes such as signal transduction, vesicle trafficking, actin cytoskeleton dynamics, cell adhesion, and cell motility. PtdIns(4,5)P2 can directly act as a second messenger or can be utilized as a precursor to generate other second messengers: inositol 1,4,5-trisphosphate (IP3), diacylglycerol (DAG) or phosphatidylinositol-3,4,5-trisphosphate (PtdIns(3,4,5)P3/PIP3). PIP5K1A-mediated phosphorylation of PtdIns(4)P is the predominant pathway for PtdIns(4,5)P2 synthesis. Together with PIP5K1A, is required for phagocytosis, both enzymes regulating different types of actin remodeling at sequential steps. Promotes particle attachment by generating the pool of PtdIns(4,5)P2 that induces controlled actin depolymerization to facilitate Fc-gamma-R clustering. Mediates RAC1-dependent reorganization of actin filaments. Required for synaptic vesicle transport. Controls the plasma membrane pool of PtdIns(4,5)P2 implicated in synaptic vesicle endocytosis and exocytosis. Plays a role in endocytosis mediated by clathrin and AP-2 (adaptor protein complex 2). Required for clathrin-coated pits assembly at the synapse. Participates in cell junction assembly. Modulates adherens junctions formation by facilitating CDH1/cadherin trafficking. Required for focal adhesion dynamics. Modulates the targeting of talins (TLN1 and TLN2) to the plasma membrane and their efficient assembly into focal adhesions. Regulates the interaction between talins (TLN1 and TLN2) and beta-integrins. Required for uropodium formation and retraction of the cell rear during directed migration. Has a role in growth factor-stimulated directional cell migration and adhesion. Required for talin assembly into nascent adhesions forming at the leading edge toward the direction of the growth factor. Negative regulator of T-cell activation and adhesion. Negatively regulates integrin alpha-L/beta-2 (LFA-1) polarization and adhesion induced by T-cell receptor. Together with PIP5K1A has a role during embryogenesis and together with PIP5K1B may have a role immediately after birth. This Rattus norvegicus (Rat) protein is Phosphatidylinositol 4-phosphate 5-kinase type-1 gamma.